The following is a 255-amino-acid chain: Imidazole glycerol phosphate synthase subunit HisF (255 aa).

Catalysis depends on residues Asp-11 and Asp-130.

The protein belongs to the HisA/HisF family. Heterodimer of HisH and HisF.

The protein localises to the cytoplasm. The enzyme catalyses 5-[(5-phospho-1-deoxy-D-ribulos-1-ylimino)methylamino]-1-(5-phospho-beta-D-ribosyl)imidazole-4-carboxamide + L-glutamine = D-erythro-1-(imidazol-4-yl)glycerol 3-phosphate + 5-amino-1-(5-phospho-beta-D-ribosyl)imidazole-4-carboxamide + L-glutamate + H(+). The protein operates within amino-acid biosynthesis; L-histidine biosynthesis; L-histidine from 5-phospho-alpha-D-ribose 1-diphosphate: step 5/9. In terms of biological role, IGPS catalyzes the conversion of PRFAR and glutamine to IGP, AICAR and glutamate. The HisF subunit catalyzes the cyclization activity that produces IGP and AICAR from PRFAR using the ammonia provided by the HisH subunit. The sequence is that of Imidazole glycerol phosphate synthase subunit HisF from Synechococcus sp. (strain ATCC 27144 / PCC 6301 / SAUG 1402/1) (Anacystis nidulans).